The sequence spans 736 residues: Elongation factor 2 (736 aa).

A tr-type G domain is found at threonine 18–lysine 234. GTP is bound by residues alanine 27–threonine 34, aspartate 93–histidine 97, and asparagine 147–aspartate 150. The residue at position 603 (histidine 603) is a Diphthamide.

It belongs to the TRAFAC class translation factor GTPase superfamily. Classic translation factor GTPase family. EF-G/EF-2 subfamily.

It is found in the cytoplasm. Catalyzes the GTP-dependent ribosomal translocation step during translation elongation. During this step, the ribosome changes from the pre-translocational (PRE) to the post-translocational (POST) state as the newly formed A-site-bound peptidyl-tRNA and P-site-bound deacylated tRNA move to the P and E sites, respectively. Catalyzes the coordinated movement of the two tRNA molecules, the mRNA and conformational changes in the ribosome. The chain is Elongation factor 2 from Saccharolobus islandicus (strain Y.N.15.51 / Yellowstone #2) (Sulfolobus islandicus).